The chain runs to 526 residues: Keratin, type I cytoskeletal 10 (526 aa).

A compositionally biased stretch (low complexity) spans 1-16 (MSVRFSSNSRQYSSAR). Residues 1-40 (MSVRFSSNSRQYSSARSGGGGGGGGGGSSIRVSSTKSSLG) are disordered. Residues 1–144 (MSVRFSSNSR…GDGGGLLSGN (144 aa)) are head. A phosphoserine mark is found at Ser17, Ser38, Ser49, Ser52, and Ser169. Residues 17-28 (SGGGGGGGGGGS) show a composition bias toward gly residues. The segment at 145 to 180 (EKVTMQNLNDRLASYMNKVRDLEESNYELEGKIKEW) is coil 1A. An IF rod domain is found at 145 to 459 (EKVTMQNLND…SLLEGEGGYV (315 aa)). Residues 181 to 201 (YEKHGNSSQREPRDYSKYYKT) form a linker 1 region. Residues 202 to 293 (IEDLKGQIVN…KNHEEEMKDL (92 aa)) form a coil 1B region. The tract at residues 294–316 (QNVSTGDVNVEMNAAPGVDLTQL) is linker 12. The interval 317 to 455 (LNNMRNQYEQ…QTYRSLLEGE (139 aa)) is coil 2. The tail stretch occupies residues 456 to 526 (GGYVGNLQIT…IESETKKHFY (71 aa)).

Belongs to the intermediate filament family. In terms of assembly, heterotetramer of two type I and two type II keratins. Heterodimer with KRT1. Two heterodimers of KRT1 and KRT10 form a heterotetramer. The KRT10 subunit in the heterotetramer is probably disulfide-linked.

It localises to the secreted. Its subcellular location is the extracellular space. The protein localises to the cell surface. It is found in the cytoplasm. Its function is as follows. Plays a role in the establishment of the epidermal barrier on plantar skin. Involved in the maintenance of cell layer development and keratin filament bundles in suprabasal cells of the epithelium. The polypeptide is Keratin, type I cytoskeletal 10 (Rattus norvegicus (Rat)).